Reading from the N-terminus, the 176-residue chain is Orotate phosphoribosyltransferase (176 aa).

5-phospho-alpha-D-ribose 1-diphosphate-binding positions include arginine 90, lysine 91, lysine 94, and 116 to 124; that span reads EDVTTTGGS. Orotate contacts are provided by threonine 120 and arginine 148.

It belongs to the purine/pyrimidine phosphoribosyltransferase family. PyrE subfamily. Homodimer. The cofactor is Mg(2+).

The catalysed reaction is orotidine 5'-phosphate + diphosphate = orotate + 5-phospho-alpha-D-ribose 1-diphosphate. It participates in pyrimidine metabolism; UMP biosynthesis via de novo pathway; UMP from orotate: step 1/2. Its function is as follows. Catalyzes the transfer of a ribosyl phosphate group from 5-phosphoribose 1-diphosphate to orotate, leading to the formation of orotidine monophosphate (OMP). In Methanocaldococcus jannaschii (strain ATCC 43067 / DSM 2661 / JAL-1 / JCM 10045 / NBRC 100440) (Methanococcus jannaschii), this protein is Orotate phosphoribosyltransferase.